We begin with the raw amino-acid sequence, 230 residues long: Orotidine 5'-phosphate decarboxylase (230 aa).

Substrate contacts are provided by residues Asp-11, Lys-34, 61-70 (DLKLHDIPNT), Thr-117, Arg-179, Gln-188, Gly-208, and Arg-209. Catalysis depends on Lys-63, which acts as the Proton donor.

This sequence belongs to the OMP decarboxylase family. Type 1 subfamily. Homodimer.

It carries out the reaction orotidine 5'-phosphate + H(+) = UMP + CO2. Its pathway is pyrimidine metabolism; UMP biosynthesis via de novo pathway; UMP from orotate: step 2/2. Its function is as follows. Catalyzes the decarboxylation of orotidine 5'-monophosphate (OMP) to uridine 5'-monophosphate (UMP). The sequence is that of Orotidine 5'-phosphate decarboxylase from Streptococcus pyogenes serotype M49 (strain NZ131).